Reading from the N-terminus, the 211-residue chain is Thiamine-phosphate synthase (211 aa).

4-amino-2-methyl-5-(diphosphooxymethyl)pyrimidine is bound by residues 37–41 (QLRIK) and Asn-69. 2 residues coordinate Mg(2+): Asp-70 and Asp-89. Ser-108 serves as a coordination point for 4-amino-2-methyl-5-(diphosphooxymethyl)pyrimidine. 134-136 (TQT) lines the 2-[(2R,5Z)-2-carboxy-4-methylthiazol-5(2H)-ylidene]ethyl phosphate pocket. Lys-137 is a 4-amino-2-methyl-5-(diphosphooxymethyl)pyrimidine binding site. Residues Gly-166 and 186–187 (VS) contribute to the 2-[(2R,5Z)-2-carboxy-4-methylthiazol-5(2H)-ylidene]ethyl phosphate site.

Belongs to the thiamine-phosphate synthase family. Requires Mg(2+) as cofactor.

The enzyme catalyses 2-[(2R,5Z)-2-carboxy-4-methylthiazol-5(2H)-ylidene]ethyl phosphate + 4-amino-2-methyl-5-(diphosphooxymethyl)pyrimidine + 2 H(+) = thiamine phosphate + CO2 + diphosphate. It catalyses the reaction 2-(2-carboxy-4-methylthiazol-5-yl)ethyl phosphate + 4-amino-2-methyl-5-(diphosphooxymethyl)pyrimidine + 2 H(+) = thiamine phosphate + CO2 + diphosphate. It carries out the reaction 4-methyl-5-(2-phosphooxyethyl)-thiazole + 4-amino-2-methyl-5-(diphosphooxymethyl)pyrimidine + H(+) = thiamine phosphate + diphosphate. The protein operates within cofactor biosynthesis; thiamine diphosphate biosynthesis; thiamine phosphate from 4-amino-2-methyl-5-diphosphomethylpyrimidine and 4-methyl-5-(2-phosphoethyl)-thiazole: step 1/1. In terms of biological role, condenses 4-methyl-5-(beta-hydroxyethyl)thiazole monophosphate (THZ-P) and 2-methyl-4-amino-5-hydroxymethyl pyrimidine pyrophosphate (HMP-PP) to form thiamine monophosphate (TMP). The sequence is that of Thiamine-phosphate synthase from Salmonella paratyphi B (strain ATCC BAA-1250 / SPB7).